Here is a 513-residue protein sequence, read N- to C-terminus: Aromatic amino acid aminotransferase 2 (513 aa).

A phosphoserine mark is found at S90 and S92. Pyridoxal 5'-phosphate contacts are provided by residues Y102, 143 to 144 (SN), N232, Y263, and 314 to 316 (TFS). N232 serves as a coordination point for substrate. At K317 the chain carries N6-(pyridoxal phosphate)lysine. R324 contacts pyridoxal 5'-phosphate. A substrate-binding site is contributed by R481.

It belongs to the class-I pyridoxal-phosphate-dependent aminotransferase family. Pyridoxal 5'-phosphate serves as cofactor.

It is found in the cytoplasm. The catalysed reaction is an aromatic L-alpha-amino acid + 2-oxoglutarate = an aromatic oxo-acid + L-glutamate. It carries out the reaction an aromatic L-alpha-amino acid + 4-methylsulfanyl-2-oxobutanoate = an aromatic oxo-acid + L-methionine. The enzyme catalyses L-kynurenine + 2-oxoglutarate = kynurenate + L-glutamate + H2O. The protein operates within amino-acid biosynthesis; L-methionine biosynthesis via salvage pathway; L-methionine from S-methyl-5-thio-alpha-D-ribose 1-phosphate: step 6/6. It participates in amino-acid degradation; L-kynurenine degradation; kynurenate from L-kynurenine: step 1/2. Its function is as follows. General aromatic amino acid transaminase involved in several otherwise unrelated metabolic pathways. Mainly involved in tryptophan degradation. Active with phenylalanine, tyrosine and tryptophan as amino donors and with phenylpyruvate, hydroxyphenylpyruvate and pyruvate as amino acceptors. Does not accept glutamate or 2-oxoglutarate as substrates. Also active with methionine, leucine, glutamine and kynurenine. Catalyzes the formation of methionine from 2-keto-4-methylthiobutyrate (KMTB) in the methionine salvage pathway primarily using aromatic amino acids (tyrosine, phenylalanine and tryptophan) as the amino donors. Catalyzes the irreversible transamination of the L-tryptophan metabolite L-kynurenine to form kynurenic acid (KA) with pyruvate as amino acceptor. In Saccharomyces cerevisiae (strain ATCC 204508 / S288c) (Baker's yeast), this protein is Aromatic amino acid aminotransferase 2.